A 568-amino-acid chain; its full sequence is Proline--tRNA ligase (568 aa).

It belongs to the class-II aminoacyl-tRNA synthetase family. ProS type 1 subfamily. Homodimer.

It is found in the cytoplasm. The catalysed reaction is tRNA(Pro) + L-proline + ATP = L-prolyl-tRNA(Pro) + AMP + diphosphate. Its function is as follows. Catalyzes the attachment of proline to tRNA(Pro) in a two-step reaction: proline is first activated by ATP to form Pro-AMP and then transferred to the acceptor end of tRNA(Pro). As ProRS can inadvertently accommodate and process non-cognate amino acids such as alanine and cysteine, to avoid such errors it has two additional distinct editing activities against alanine. One activity is designated as 'pretransfer' editing and involves the tRNA(Pro)-independent hydrolysis of activated Ala-AMP. The other activity is designated 'posttransfer' editing and involves deacylation of mischarged Ala-tRNA(Pro). The misacylated Cys-tRNA(Pro) is not edited by ProRS. The sequence is that of Proline--tRNA ligase from Listeria monocytogenes serotype 4a (strain HCC23).